A 331-amino-acid chain; its full sequence is Phosphoenolpyruvate transferase (331 aa).

Asp-63 serves as a coordination point for 7,8-didemethyl-8-hydroxy-5-deazariboflavin.

The protein belongs to the CofD family. As to quaternary structure, homodimer. It depends on Mg(2+) as a cofactor.

It carries out the reaction enolpyruvoyl-2-diphospho-5'-guanosine + 7,8-didemethyl-8-hydroxy-5-deazariboflavin = dehydro coenzyme F420-0 + GMP + H(+). It participates in cofactor biosynthesis; coenzyme F420 biosynthesis. Its function is as follows. Catalyzes the transfer of the phosphoenolpyruvate moiety from enoylpyruvoyl-2-diphospho-5'-guanosine (EPPG) to 7,8-didemethyl-8-hydroxy-5-deazariboflavin (FO) with the formation of dehydro coenzyme F420-0 and GMP. This is Phosphoenolpyruvate transferase from Mycobacterium sp. (strain KMS).